A 540-amino-acid chain; its full sequence is Ubiquitin carboxyl-terminal hydrolase 17-like protein E (540 aa).

A disordered region spans residues 1 to 22 (MVVSLSFPEETGGENLPSAPLE). A USP domain is found at 85–382 (CGLQNTGNSC…NAYVLFYVQQ (298 aa)). The active-site Nucleophile is the C94. H341 serves as the catalytic Proton acceptor. Composition is skewed to basic and acidic residues over residues 431-441 (NREKRAKKETS) and 508-520 (APDK…HNGD). Disordered stretches follow at residues 431 to 461 (NREK…QKHG) and 499 to 540 (RSTA…QGGR). Over residues 523–540 (LTSQGLMSPGQLCSQGGR) the composition is skewed to polar residues.

This sequence belongs to the peptidase C19 family. USP17 subfamily. As to quaternary structure, interacts with SUDS3; the interaction is direct.

The protein localises to the nucleus. It localises to the endoplasmic reticulum. It catalyses the reaction Thiol-dependent hydrolysis of ester, thioester, amide, peptide and isopeptide bonds formed by the C-terminal Gly of ubiquitin (a 76-residue protein attached to proteins as an intracellular targeting signal).. Its function is as follows. Deubiquitinating enzyme that removes conjugated ubiquitin from specific proteins to regulate different cellular processes that may include cell proliferation, progression through the cell cycle, apoptosis, cell migration, and the cellular response to viral infection. The polypeptide is Ubiquitin carboxyl-terminal hydrolase 17-like protein E (Usp17le) (Mus musculus (Mouse)).